Here is a 561-residue protein sequence, read N- to C-terminus: Probable galacturonosyltransferase 9 (561 aa).

Over Met1 to Arg27 the chain is Cytoplasmic. The chain crosses the membrane as a helical; Signal-anchor for type II membrane protein span at residues Ile28 to Ser48. Residues Ser49–Leu561 lie on the Lumenal side of the membrane. Residues Asn124, Asn320, Asn346, and Asn426 are each glycosylated (N-linked (GlcNAc...) asparagine).

It belongs to the glycosyltransferase 8 family. Expressed in roots, inflorescences, siliques, leaves and stems.

The protein localises to the golgi apparatus membrane. Its pathway is glycan metabolism; pectin biosynthesis. Functionally, may be involved in pectin synthesis. This Arabidopsis thaliana (Mouse-ear cress) protein is Probable galacturonosyltransferase 9 (GAUT9).